Consider the following 60-residue polypeptide: Ferredoxin (60 aa).

2 consecutive 4Fe-4S ferredoxin-type domains span residues 2–30 (VTID…EIQG) and 31–60 (DKVV…TVKE). Positions 9, 14, 17, 21, 41, 44, 47, and 51 each coordinate [4Fe-4S] cluster.

It depends on [4Fe-4S] cluster as a cofactor.

In terms of biological role, ferredoxins are iron-sulfur proteins that transfer electrons probably in the CO-dehydrogenase complex. The chain is Ferredoxin from Methanothermococcus thermolithotrophicus (Methanococcus thermolithotrophicus).